The sequence spans 263 residues: Phosphate import ATP-binding protein PstB (263 aa).

The 242-residue stretch at 17-258 (ISVKNLDFFY…PKRKETEDYI (242 aa)) folds into the ABC transporter domain. 49 to 56 (GPSGCGKS) is a binding site for ATP.

It belongs to the ABC transporter superfamily. Phosphate importer (TC 3.A.1.7) family. As to quaternary structure, the complex is composed of two ATP-binding proteins (PstB), two transmembrane proteins (PstC and PstA) and a solute-binding protein (PstS).

The protein localises to the cell inner membrane. The catalysed reaction is phosphate(out) + ATP + H2O = ADP + 2 phosphate(in) + H(+). In terms of biological role, part of the ABC transporter complex PstSACB involved in phosphate import. Responsible for energy coupling to the transport system. In Polaromonas sp. (strain JS666 / ATCC BAA-500), this protein is Phosphate import ATP-binding protein PstB.